A 258-amino-acid polypeptide reads, in one-letter code: Hydroxyethylthiazole kinase (258 aa).

Met-37 lines the substrate pocket. ATP is bound by residues Arg-112 and Thr-158. Ala-185 contributes to the substrate binding site.

The protein belongs to the Thz kinase family. Requires Mg(2+) as cofactor.

It catalyses the reaction 5-(2-hydroxyethyl)-4-methylthiazole + ATP = 4-methyl-5-(2-phosphooxyethyl)-thiazole + ADP + H(+). The protein operates within cofactor biosynthesis; thiamine diphosphate biosynthesis; 4-methyl-5-(2-phosphoethyl)-thiazole from 5-(2-hydroxyethyl)-4-methylthiazole: step 1/1. In terms of biological role, catalyzes the phosphorylation of the hydroxyl group of 4-methyl-5-beta-hydroxyethylthiazole (THZ). The polypeptide is Hydroxyethylthiazole kinase (Rhizobium etli (strain ATCC 51251 / DSM 11541 / JCM 21823 / NBRC 15573 / CFN 42)).